The sequence spans 156 residues: Small ribosomal subunit protein uS7 (156 aa).

The protein belongs to the universal ribosomal protein uS7 family. Part of the 30S ribosomal subunit. Contacts proteins S9 and S11.

Its function is as follows. One of the primary rRNA binding proteins, it binds directly to 16S rRNA where it nucleates assembly of the head domain of the 30S subunit. Is located at the subunit interface close to the decoding center, probably blocks exit of the E-site tRNA. The chain is Small ribosomal subunit protein uS7 from Chlorobaculum tepidum (strain ATCC 49652 / DSM 12025 / NBRC 103806 / TLS) (Chlorobium tepidum).